A 150-amino-acid polypeptide reads, in one-letter code: Large ribosomal subunit protein bL9 (150 aa).

It belongs to the bacterial ribosomal protein bL9 family.

Functionally, binds to the 23S rRNA. This chain is Large ribosomal subunit protein bL9, found in Paracidovorax citrulli (strain AAC00-1) (Acidovorax citrulli).